Here is a 375-residue protein sequence, read N- to C-terminus: Histidine biosynthesis bifunctional protein HisB (375 aa).

Positions 1–168 (MTPILFVDRD…GIAHELADAP (168 aa)) are histidinol-phosphatase. The active-site Nucleophile is D8. Positions 8, 10, and 128 each coordinate Mg(2+). D10 serves as the catalytic Proton donor. The interval 169 to 375 (RRAVVQRNTK…TALPSTKGAL (207 aa)) is imidazoleglycerol-phosphate dehydratase.

This sequence in the N-terminal section; belongs to the histidinol-phosphatase family. It in the C-terminal section; belongs to the imidazoleglycerol-phosphate dehydratase family. It depends on Mg(2+) as a cofactor.

The protein resides in the cytoplasm. It catalyses the reaction D-erythro-1-(imidazol-4-yl)glycerol 3-phosphate = 3-(imidazol-4-yl)-2-oxopropyl phosphate + H2O. It carries out the reaction L-histidinol phosphate + H2O = L-histidinol + phosphate. The protein operates within amino-acid biosynthesis; L-histidine biosynthesis; L-histidine from 5-phospho-alpha-D-ribose 1-diphosphate: step 6/9. It functions in the pathway amino-acid biosynthesis; L-histidine biosynthesis; L-histidine from 5-phospho-alpha-D-ribose 1-diphosphate: step 8/9. In Xanthomonas campestris pv. campestris (strain B100), this protein is Histidine biosynthesis bifunctional protein HisB.